Consider the following 242-residue polypeptide: Transcriptional activator protein BjaR1 (242 aa).

Positions 173 to 238 (TPYPSTRLTP…HAVALAIRHK (66 aa)) constitute an HTH luxR-type domain. The H-T-H motif DNA-binding region spans 197 to 216 (AWEIGEILHITQRTAEEHLA).

Belongs to the autoinducer-regulated transcriptional regulatory protein family.

Functionally, transcriptional activator that functions in response to the quorum-sensing autoinducer IV-HSL (isovaleryl-homoserine lactone). Activates BjaI expression. Is sensitive to IV-HSL at concentrations as low as 10 pM. In Bradyrhizobium diazoefficiens (strain JCM 10833 / BCRC 13528 / IAM 13628 / NBRC 14792 / USDA 110), this protein is Transcriptional activator protein BjaR1 (bjaR1).